A 602-amino-acid chain; its full sequence is CDPK-related protein kinase (602 aa).

The segment at 1–59 (MGICVSKPSPEPDLHNHHTSIPVNDTSLPPQDNSIPPKDIAIPAQDNNKPPGKKSPFLP) is disordered. A compositionally biased stretch (polar residues) spans 19 to 34 (TSIPVNDTSLPPQDNS). Tandem repeats lie at residues 20–26 (SIPVNDT), 27–33 (SLPPQDN), and 34–40 (SIPPKDI). The 3 X 7 AA tandem repeats of S-[LI]-P-X-X-D-X stretch occupies residues 20–40 (SIPVNDTSLPPQDNSIPPKDI). The Protein kinase domain maps to 148 to 410 (FEVGEEVGRG…AAQALCHSWI (263 aa)). Residues 154 to 162 (VGRGHFGYT) and K180 each bind ATP. Residue D276 is the Proton acceptor of the active site. 4 EF-hand domains span residues 451 to 486 (VDELFYLKEQFVLLEPTKNGTISLENIKQALMRNST), 487 to 527 (DAMK…LEAL), 528 to 563 (DRWEQHARCAYDLFEKDGNRAIMIEELASELGLGPS), and 564 to 602 (IPVHAVLHDWIRHTDGKLSFLGYVKLLHGVSTRAIAKAQ).

The protein belongs to the protein kinase superfamily. CAMK Ser/Thr protein kinase family. CaMK subfamily.

The enzyme catalyses L-seryl-[protein] + ATP = O-phospho-L-seryl-[protein] + ADP + H(+). The catalysed reaction is L-threonyl-[protein] + ATP = O-phospho-L-threonyl-[protein] + ADP + H(+). In Daucus carota (Wild carrot), this protein is CDPK-related protein kinase (CRK).